The following is a 220-amino-acid chain: UPF0319 protein CKO_02102 (220 aa).

The N-terminal stretch at 1 to 20 (MKTGIITMLFVLYLPVTAFA) is a signal peptide.

This sequence belongs to the UPF0319 family.

This is UPF0319 protein CKO_02102 from Citrobacter koseri (strain ATCC BAA-895 / CDC 4225-83 / SGSC4696).